The sequence spans 120 residues: Superoxide dismutase [Cu-Zn] (120 aa).

Residues H11, H13, and H28 each coordinate Cu cation. Residues 16–52 (GDTTNGCMSTGPHFNPTGKEHGAPQDENRHAGDLGNI) form a disordered region. A disulfide bridge connects residues C22 and C112. Zn(2+)-binding residues include H28, H36, H45, and D48. Basic and acidic residues predominate over residues 33–47 (GKEHGAPQDENRHAG). Cu cation is bound at residue H85.

It belongs to the Cu-Zn superoxide dismutase family. Homodimer. The cofactor is Cu cation. Zn(2+) is required as a cofactor.

It is found in the cytoplasm. It carries out the reaction 2 superoxide + 2 H(+) = H2O2 + O2. Functionally, destroys radicals which are normally produced within the cells and which are toxic to biological systems. The chain is Superoxide dismutase [Cu-Zn] (sodC) from Aspergillus japonicus.